A 130-amino-acid polypeptide reads, in one-letter code: Protachykinin-1 (130 aa).

An N-terminal signal peptide occupies residues 1-19; sequence MKILVAVAVFFLVSTQLFA. Residues 20–56 constitute a propeptide that is removed on maturation; the sequence is EEIDANDDLNYWSDWSDSDQIKEAMPEPFEHLLQRIA. Residues Met-68 and Met-107 each carry the methionine amide modification.

Belongs to the tachykinin family. The substance P form is cleaved at Pro-59 by the prolyl endopeptidase FAP (seprase) activity (in vitro). Substance P is also cleaved and degraded by Angiotensin-converting enzyme (ACE) and neprilysin (MME).

The protein localises to the secreted. Its function is as follows. Tachykinins are active peptides which excite neurons, evoke behavioral responses, are potent vasodilators and secretagogues, and contract (directly or indirectly) many smooth muscles. The sequence is that of Protachykinin-1 (Tac1) from Mus musculus (Mouse).